The chain runs to 379 residues: MPTVFPHDSVGLVTPQTAHFSEPLALACGRSLPAYDLIYETYGQLNAARSNAVLICHALSGHHHAAGFHSADDRKPGWWDSCIGPGKPIDTTKFFVVSLNNLGGCNGSTGPSSIDPDTGKPFGANFPVVTVEDWVNSQARLADLLGIDTWAAVIGGSLGGMQALQWTISYPNRVRHCLAIASAPKLSAQNIAFNEVARQAILTDPEFHGGSFQERGVIPKRGLMLARMVGHITYLSDDSMGEKFGRGLKSEKLNYDFHSVEFQVESYLRYQGEEFSGRFDANTYLLMTKALDYFDPAANFNDDLAKTFANATARFCVMSFTTDWRFSPARSRELVDALMAARKDVCYLEIDAPQGHDAFLIPIPRYLQAFGNYMNRISL.

One can recognise an AB hydrolase-1 domain in the interval 51-360 (NAVLICHALS…DAPQGHDAFL (310 aa)). Serine 157 (nucleophile) is an active-site residue. Residue arginine 227 participates in substrate binding. Catalysis depends on residues aspartate 323 and histidine 356. Aspartate 357 is a substrate binding site.

It belongs to the AB hydrolase superfamily. MetX family. Homodimer.

Its subcellular location is the cytoplasm. It catalyses the reaction L-homoserine + succinyl-CoA = O-succinyl-L-homoserine + CoA. It functions in the pathway amino-acid biosynthesis; L-methionine biosynthesis via de novo pathway; O-succinyl-L-homoserine from L-homoserine: step 1/1. Requires MetW for activity. Its function is as follows. Transfers a succinyl group from succinyl-CoA to L-homoserine, forming succinyl-L-homoserine. In Pseudomonas syringae pv. syringae (strain B728a), this protein is Homoserine O-succinyltransferase.